Consider the following 464-residue polypeptide: Elongation factor 1-alpha (464 aa).

In terms of domain architecture, tr-type G spans 5-242; the sequence is KTHINIVVIG…DSVVPPQRPT (238 aa). Residues 14-21, 91-95, and 153-156 contribute to the GTP site; these read GHVDSGKS, DAPGH, and NKMD. Residues Glu301 and Glu374 each carry the 5-glutamyl glycerylphosphorylethanolamine modification.

It belongs to the TRAFAC class translation factor GTPase superfamily. Classic translation factor GTPase family. EF-Tu/EF-1A subfamily.

The protein resides in the cytoplasm. This protein promotes the GTP-dependent binding of aminoacyl-tRNA to the A-site of ribosomes during protein biosynthesis. This Onchocerca volvulus protein is Elongation factor 1-alpha.